A 383-amino-acid chain; its full sequence is MARREKNPIRATVAMNIGLSDSLLAFVNNYVKALRFSLFWMKENVKNPNEKGALSKVHEGLYEKLRKEYNLPSKVTEDCYRDALAIYKSWYNNPKKGRFPRVYKPTVWLTPKQSYTVDLEKMTVRIASVGELPILGYPRNLKEYANWKMKEARLTIKDGKALLKVTFEKEEEKVKPKDSVAVDINMNDIVVGKDDTHYVRIPTRLHDAHHFKSLAENLQKKYPRRWKQNRRILHRARSFHQKAKLIMEDYARKVGKWVVEIAEGLGANVIKLEDLKNLIKDVNKLPAEFRDKLYLMQYRRIQYWIEWQAKKHGMIVEFVNPSYSSVSCPKCGHKMVEIAYRYFHCPSCGYENDRDVIAIMNLNGRGSLTLSTAPQMRDVAPNR.

Zn(2+)-binding residues include Cys-328, Cys-331, Cys-345, and Cys-348.

In the N-terminal section; belongs to the transposase 2 family. This sequence in the C-terminal section; belongs to the transposase 35 family.

This Acidianus convivator (ATV) protein is TnpB-like protein ORF383B.